The chain runs to 90 residues: MPRSIKKGPFVDHHLMKKIDEANATGAKKPIKTWSRRSMVLPEMIGKTIAVHNGKQHVPVLVSDNMVGHKLGEFAPTRTYKGHQADKKSK.

This sequence belongs to the universal ribosomal protein uS19 family.

In terms of biological role, protein S19 forms a complex with S13 that binds strongly to the 16S ribosomal RNA. The polypeptide is Small ribosomal subunit protein uS19 (Methylococcus capsulatus (strain ATCC 33009 / NCIMB 11132 / Bath)).